We begin with the raw amino-acid sequence, 214 residues long: Potassium/proton antiporter CemA (214 aa).

Helical transmembrane passes span I92–G112 and I174–I194.

Belongs to the CemA family.

The protein resides in the plastid. Its subcellular location is the chloroplast inner membrane. It carries out the reaction K(+)(in) + H(+)(out) = K(+)(out) + H(+)(in). Contributes to K(+)/H(+) antiport activity by supporting proton efflux to control proton extrusion and homeostasis in chloroplasts in a light-dependent manner to modulate photosynthesis. Prevents excessive induction of non-photochemical quenching (NPQ) under continuous-light conditions. Indirectly promotes efficient inorganic carbon uptake into chloroplasts. The polypeptide is Potassium/proton antiporter CemA (Oenothera argillicola (Appalachian evening primrose)).